Here is a 278-residue protein sequence, read N- to C-terminus: Orotidine 5'-phosphate decarboxylase (278 aa).

Lys95 (proton donor) is an active-site residue.

Belongs to the OMP decarboxylase family. Type 2 subfamily.

The enzyme catalyses orotidine 5'-phosphate + H(+) = UMP + CO2. Its pathway is pyrimidine metabolism; UMP biosynthesis via de novo pathway; UMP from orotate: step 2/2. This is Orotidine 5'-phosphate decarboxylase from Corynebacterium glutamicum (strain R).